The sequence spans 434 residues: Ribosomal protein uS12 methylthiotransferase RimO (434 aa).

Positions 1-107 constitute an MTTase N-terminal domain; that stretch reads MHLGCEKNLV…ILNVLQRIEQ (107 aa). 6 residues coordinate [4Fe-4S] cluster: Cys5, Cys41, Cys70, Cys145, Cys149, and Cys152. Residues 131 to 360 enclose the Radical SAM core domain; that stretch reads TTGKAVAYLK…ISIQQPIAEL (230 aa). Residues 363-434 enclose the TRAM domain; sequence QNWIGRTVDV…DLYDLTGQVV (72 aa).

It belongs to the methylthiotransferase family. RimO subfamily. [4Fe-4S] cluster serves as cofactor.

Its subcellular location is the cytoplasm. It carries out the reaction L-aspartate(89)-[ribosomal protein uS12]-hydrogen + (sulfur carrier)-SH + AH2 + 2 S-adenosyl-L-methionine = 3-methylsulfanyl-L-aspartate(89)-[ribosomal protein uS12]-hydrogen + (sulfur carrier)-H + 5'-deoxyadenosine + L-methionine + A + S-adenosyl-L-homocysteine + 2 H(+). Functionally, catalyzes the methylthiolation of an aspartic acid residue of ribosomal protein uS12. The polypeptide is Ribosomal protein uS12 methylthiotransferase RimO (Prochlorococcus marinus (strain SARG / CCMP1375 / SS120)).